The primary structure comprises 199 residues: Inducible T-cell costimulator (199 aa).

The signal sequence occupies residues 1-20 (MKSGLWYFFLFCLRIKVLTG). At 21-140 (EINGSANYEM…YESQLCCQLK (120 aa)) the chain is on the extracellular side. The 103-residue stretch at 30–132 (MFIFHNGGVQ…LTGGYLHIYE (103 aa)) folds into the Ig-like V-type domain. Cystine bridges form between cysteine 42–cysteine 109 and cysteine 63–cysteine 83. Residues asparagine 89 and asparagine 110 are each glycosylated (N-linked (GlcNAc...) asparagine). A helical membrane pass occupies residues 141 to 161 (FWLPIGCAAFVVVCILGCILI). The Cytoplasmic portion of the chain corresponds to 162 to 199 (CWLTKKKYSSSVHDPNGEYMFMRAVNTAKKSRLTDVTL).

In terms of assembly, homodimer; disulfide-linked. Interacts with ICOSLG. Interacts with PIK3R1. Interacts with TBK1; this interaction is critical for the maturation of T follicular regulatory cells. N-glycosylated. Activated T-cells. Highly expressed on tonsillar T-cells, which are closely associated with B-cells in the apical light zone of germinal centers, the site of terminal B-cell maturation. Expressed at lower levels in thymus, lung, lymph node and peripheral blood leukocytes. Expressed in the medulla of fetal and newborn thymus.

The protein resides in the cell membrane. Its subcellular location is the secreted. Functionally, stimulatory receptor expressed in activated or antigen-experienced T-cells that plays an important role in the immune response. Upon binding to its ligand ICOSL expressed on antigen presenting cells (APCs), delivers costimulatory signals that enhances all basic T-cell responses to a foreign antigen, namely proliferation, secretion of lymphokines including IL10, up-regulation of molecules that mediate cell-cell interaction, and effective help for antibody secretion by B-cells. Also acts as a costimulatory receptor critical for the differentiation of T follicular regulatory cells upon immune challenges such as viral infection. Mechanistically, potentiates TCR-induced calcium flux by augmenting PLCG1 activation and actin remodeling. In addition, activates PI3K signaling pathways independently of calcium flux. Essential both for efficient interaction between T and B-cells and for normal antibody responses to T-cell dependent antigens. Prevents the apoptosis of pre-activated T-cells. Plays a critical role in CD40-mediated class switching of immunoglobin isotypes. The protein is Inducible T-cell costimulator (ICOS) of Homo sapiens (Human).